A 975-amino-acid chain; its full sequence is MLKSISGGVGVASTERGGGGGGCGGGGAGGSASGSRSTSGSGRASCGLGSSSISSGLSAVCGFVTGASGGGGFERDRDRDRGLANISGGSTPAGILYCPACMAAANQQSPSQNSSPHHESFFLRSSFKSSKRNKARKSASTAGCLDAQHIRANLRMSMSSSMRSSRGNGGGGAASSSHPPGSSCSSGPGGSGCSMAYDAASNASSGSGSGSGKATSPGSYSCNALNVDFTSYTATHQWTRMLECAEFVGAKRSKHTVVAYKDAMFVFGGDNGKNMLNDLIRFGVKDKSWGRACATGTPPAPRYHHSAVVAGSSMFIFGGYTGDIHSNSNLTNKNDLFEYKFQSAMWVEWKFSGRQPVPRSAHGAAVYDNKMWIYAGYDGNARLNDMWTLNLTGENQWEEVDQLGDRPPTCCNFPVAVARDAMYVFSGQSGLQITNSLFEFHFKTRTWRRISNEPVLRGATSAPPSRRYGHTMVHHDRFLYVFGGSADSTLPNDLHCYDLDSQVWSVIQPEQNSDVPSGRVFHASAVICDAMYIFGGTVDNSVRRGDTYRFQFSSYPKCTLRDDFGKFFQDKQFCDIQFIVGAEEIRILAHIAFVAARSKYLRNKILAAREARQQQMEKVYGVGQVDALALNAGAGGDRGPMLEVRLANASPEAFEIILNYIYTDRIDLKDTYSKNIIILITDIYQLAGLFTMPRLAHGCIQYLDYKINKLNVLEALYNADKSNIKIIKDHCMQFIIKEENFTDVVMSSEFSDLDKPLLVEIIRKRLYPSKLVIDTSYEGNIGTTLEIDLCAFLESTGKDFCDISLVLEDHVIPAHKSVLSSRCTYFQGMFRSFMPPDNTVNIQIGEISPSLEAFHSLLRYIYYGETKMPPQDALYLFQAPCFYGLANNRLHAFCKYSLEHNITFENVLQTLEASDITKIYDIKEYALKLIVKDFAKVARLPKIAGLSRELLLEIIRAVADSHGEFLTRININTDI.

Positions arginine 16–alanine 32 are enriched in gly residues. 2 disordered regions span residues arginine 16–serine 41 and methionine 158–serine 186. A compositionally biased stretch (low complexity) spans alanine 174–serine 186. Kelch repeat units follow at residues alanine 263–serine 312, methionine 314–asparagine 369, lysine 370–valine 417, alanine 421–arginine 467, phenylalanine 478–serine 524, and alanine 530–glycine 581. BTB domains lie at cysteine 574 to aspartate 670 and cysteine 801 to proline 870.

The protein belongs to the LZTR1 family. In terms of assembly, component of some BCR (BTB-CUL3-RBX1) E3 ubiquitin-protein ligase complex. Expressed in Rdl-expressing neurons of the mushroom body, the neurons projecting to the LC9 optic glomerulus and in a neuronal cluster near the subesophageal ganglion (at protein level).

Its pathway is protein modification; protein ubiquitination. Inhibitor of Ras signaling. Acts as a substrate-specific adapter of a BCR (BTB-CUL3-RBX1) E3 ubiquitin-protein ligase complex that mediates ubiquitination of Ras. Together with Nf1, plays an important role for normal sleep behavior, mainly during the night. Might affect sleep by modulating GABA signaling in Rdl-expressing neurons. Might play a role in the regulation of brain glycogen metabolism and organismal levels of triglycerides. The chain is Leucine-zipper-like transcriptional regulator 1 homolog from Drosophila melanogaster (Fruit fly).